A 56-amino-acid chain; its full sequence is MFTVFLLVVLATAVVSFTSDRASDDGKAAASDLITLTIKGCCSRPPCIANNPDLCG.

An N-terminal signal peptide occupies residues 1–16 (MFTVFLLVVLATAVVS). The propeptide occupies 17–39 (FTSDRASDDGKAAASDLITLTIK). Cystine bridges form between C41–C47 and C42–C55. Residues 43-45 (SRP) form a ser-Xaa-Pro motif, crucial for potent interaction with nAChR region. Residues P45 and P46 each carry the 4-hydroxyproline; partial modification. C55 carries the post-translational modification Cysteine amide.

Belongs to the conotoxin A superfamily. Post-translationally, exists in 4 different forms, depending on hydroxylations. Tx1a-PP does not contain hydroxyproline, tx1a-OP has one hydroxyproline at position 45, tx1a-PO has one hydroxyproline at position 46, and tx1a-PP has two hydroxyprolines at positions 45 and 46. As to expression, expressed by the venom duct. Tx1a that containing 1 or 2 non-hydroxylated prolines are mostly present in part 5 of the venom duct (distal part near the pharynx), whereas tx1a-OO (with 2 hydroxyprolines) is mostly present in part 4 of the venom duct (follewed by part 3).

Its subcellular location is the secreted. Its function is as follows. Alpha-conotoxins act on postsynaptic membranes, they bind to the nicotinic acetylcholine receptors (nAChR) and thus inhibit them. This toxin inhibits rat alpha-3-beta-2/CHRNA3-CHRNB2 (IC(50)=3.5 nM), rat alpha-7/CHRNA7 (IC(50)=392 nM) nAChR, and the L.stagnalis soluble acetylcholine receptor (all tested without hydroxyproline). This Conus textile (Cloth-of-gold cone) protein is Alpha-conotoxin TxIA.